Reading from the N-terminus, the 248-residue chain is Pyridoxal 4-dehydrogenase (248 aa).

11–35 (LVTGAAQGIGKAIAARLAADGATVI) contributes to the NAD(+) binding site. Ser141 is a binding site for substrate. Catalysis depends on Tyr154, which acts as the Proton acceptor.

It belongs to the short-chain dehydrogenases/reductases (SDR) family. In terms of assembly, homotetramer.

It carries out the reaction pyridoxal + NAD(+) = 4-pyridoxolactone + NADH + H(+). It participates in cofactor degradation; B6 vitamer degradation; 4-pyridoxate from pyridoxal: step 1/2. In terms of biological role, involved in the degradation of pyridoxine or pyridoxamine (free, phosphate-unbound, forms of vitamin B6). Oxidizes pyridoxal to 4-pyridoxolactone, but does not have activity toward pyridoxal 5'-phosphate, pyridoxine, pyridoxamine, pyridoxamine 5'-phosphate, 4-phthalaldehyde, 2-nitrobenzaldehyde, pyridine, formaldehyde, 2-carboxybenzaldehyde or sugars. The polypeptide is Pyridoxal 4-dehydrogenase (Mesorhizobium japonicum (strain LMG 29417 / CECT 9101 / MAFF 303099) (Mesorhizobium loti (strain MAFF 303099))).